An 87-amino-acid chain; its full sequence is Elastase inhibitor AFLEI (87 aa).

The signal sequence occupies residues 1 to 19; it reads MKFSLACLLALAGLQAALA. A disulfide bond links Cys24 and Cys86.

The protein localises to the secreted. Functionally, elastase inhibitor. The protein is Elastase inhibitor AFLEI of Aspergillus fumigatus (strain CBS 144.89 / FGSC A1163 / CEA10) (Neosartorya fumigata).